A 508-amino-acid polypeptide reads, in one-letter code: Glycerol kinase (508 aa).

Thr14 contributes to the ADP binding site. ATP contacts are provided by Thr14, Thr15, and Ser16. Residue Thr14 coordinates sn-glycerol 3-phosphate. Arg18 is an ADP binding site. Sn-glycerol 3-phosphate-binding residues include Arg84, Glu85, and Tyr136. Arg84, Glu85, and Tyr136 together coordinate glycerol. His232 is subject to Phosphohistidine; by HPr. Asp246 contributes to the sn-glycerol 3-phosphate binding site. Glycerol is bound by residues Asp246 and Gln247. ADP is bound by residues Thr268 and Gly311. ATP-binding residues include Thr268, Gly311, Gln315, and Gly412. The ADP site is built by Gly412 and Asn416.

This sequence belongs to the FGGY kinase family. In terms of assembly, homotetramer and homodimer (in equilibrium). Post-translationally, the phosphoenolpyruvate-dependent sugar phosphotransferase system (PTS), including enzyme I, and histidine-containing protein (HPr) are required for the phosphorylation, which leads to the activation of the enzyme.

The enzyme catalyses glycerol + ATP = sn-glycerol 3-phosphate + ADP + H(+). It functions in the pathway polyol metabolism; glycerol degradation via glycerol kinase pathway; sn-glycerol 3-phosphate from glycerol: step 1/1. Its activity is regulated as follows. Activated by phosphorylation and inhibited by fructose 1,6-bisphosphate (FBP). Key enzyme in the regulation of glycerol uptake and metabolism. Catalyzes the phosphorylation of glycerol to yield sn-glycerol 3-phosphate. This chain is Glycerol kinase, found in Streptococcus pyogenes serotype M12 (strain MGAS2096).